The chain runs to 288 residues: Thymidylate synthase (288 aa).

R21 is a dUMP binding site. H51 is a (6R)-5,10-methylene-5,6,7,8-tetrahydrofolate binding site. Residue 150–151 (RR) coordinates dUMP. The active-site Nucleophile is C170. DUMP contacts are provided by residues 190–193 (RSGD), N201, and 231–233 (HIY). D193 contacts (6R)-5,10-methylene-5,6,7,8-tetrahydrofolate. Residue A287 coordinates (6R)-5,10-methylene-5,6,7,8-tetrahydrofolate.

It belongs to the thymidylate synthase family. Bacterial-type ThyA subfamily. In terms of assembly, homodimer.

The protein resides in the cytoplasm. It carries out the reaction dUMP + (6R)-5,10-methylene-5,6,7,8-tetrahydrofolate = 7,8-dihydrofolate + dTMP. It functions in the pathway pyrimidine metabolism; dTTP biosynthesis. Its function is as follows. Catalyzes the reductive methylation of 2'-deoxyuridine-5'-monophosphate (dUMP) to 2'-deoxythymidine-5'-monophosphate (dTMP) while utilizing 5,10-methylenetetrahydrofolate (mTHF) as the methyl donor and reductant in the reaction, yielding dihydrofolate (DHF) as a by-product. This enzymatic reaction provides an intracellular de novo source of dTMP, an essential precursor for DNA biosynthesis. The polypeptide is Thymidylate synthase (Mycoplasma mobile (strain ATCC 43663 / 163K / NCTC 11711) (Mesomycoplasma mobile)).